The chain runs to 125 residues: Allatostatin (125 aa).

The first 26 residues, 1-26 (MKTSAYNVYLGVVAAMLALLFVTINA), serve as a signal peptide directing secretion. The propeptide occupies 27–106 (APMEADDETA…SRLARQWRAD (80 aa)). At Q109 the chain carries Pyrrolidone carboxylic acid.

Belongs to the allatostatin family.

The protein resides in the secreted. In terms of biological role, strongly inhibits juvenile hormone biosynthesis in vitro by the corpora allata from fifth-stadium larvae and adult females. This chain is Allatostatin, found in Spodoptera frugiperda (Fall armyworm).